Here is a 274-residue protein sequence, read N- to C-terminus: MQFSKMHGLGNDFMVVDAVTQNVFFSPDLIRRLADRHLGVGFDQLLVVEPPYDPELDFHYRIFNADGSEVAQCGNGARCFARFVRLKGLTNKRDIRVSTANGRMVLTVTDDDLVRVNMGEPNFEPSAVPFRANKVEKTYIMRAAEQTILCGVVSMGNPHCVIQVDDVDTAAVETLGPVLESHERFPERANIGFMQVVKREHIRLRVYERGAGETQACGSGACAAVAVGIQQGLLAEEVRVELPGGRLDIAWKGPGHPLYMTGPAVHVYDGFIHL.

3 residues coordinate substrate: Asn11, Gln44, and Asn64. Cys73 serves as the catalytic Proton donor. Substrate is bound by residues 74–75 (GN), Asn157, Asn190, and 208–209 (ER). The active-site Proton acceptor is Cys217. Position 218–219 (218–219 (GS)) interacts with substrate.

This sequence belongs to the diaminopimelate epimerase family. Homodimer.

The protein localises to the cytoplasm. The catalysed reaction is (2S,6S)-2,6-diaminopimelate = meso-2,6-diaminopimelate. It functions in the pathway amino-acid biosynthesis; L-lysine biosynthesis via DAP pathway; DL-2,6-diaminopimelate from LL-2,6-diaminopimelate: step 1/1. Its function is as follows. Catalyzes the stereoinversion of LL-2,6-diaminopimelate (L,L-DAP) to meso-diaminopimelate (meso-DAP), a precursor of L-lysine and an essential component of the bacterial peptidoglycan. This chain is Diaminopimelate epimerase, found in Escherichia coli O6:H1 (strain CFT073 / ATCC 700928 / UPEC).